The chain runs to 1064 residues: Lethal(2) giant larvae protein homolog 1 (1064 aa).

WD repeat units follow at residues 38 to 71 (SALA…FTGL), 78 to 119 (VTQM…ALSF), 139 to 176 (VTVV…GQTL), 200 to 234 (SLQG…DHIF), 240 to 272 (LESL…GSFP), 290 to 332 (AINK…ETLV), 340 to 374 (IIDF…VLDL), 396 to 474 (TCSA…YKLS), 518 to 593 (QKVA…RVLV), 602 to 663 (TAVT…LRQS), 723 to 783 (VRCL…KEVQ), 792 to 844 (AIAV…VSAK), 849 to 902 (LTAH…VHYS), and 916 to 939 (VFTR…SLSA). At Ser-663 the chain carries Phosphoserine. Thr-958 carries the post-translational modification Phosphothreonine. Residues 966–1010 (ESPKLSQANGTPSILLAPQSLDGSPDPAHSMGPDTPEPPEAALSP) form a disordered region. 2 positions are modified to phosphoserine: Ser-967 and Ser-985.

It belongs to the WD repeat L(2)GL family. As to quaternary structure, associated with nonmuscle myosin II heavy chain. Interacts with PRKCI/aPKC, PARD6B/Par-6 and PARD6A. Interacts with STX4A. Interacts with RAB10 (GDP-bound form); the interaction is direct and promotes RAB10 association with membranes and activation through competition with the Rab inhibitor GDI1. Interacts with DCAF1. Phosphorylated at least at Ser-663 by PRKCI. Expressed in brain, kidney, and muscle but is barely seen in heart and placenta. Down-regulated or lost in all cell lines and in most of the tumor samples analyzed. Loss was associated with advanced stage of the disease.

The protein localises to the early endosome membrane. It localises to the golgi apparatus. Its subcellular location is the trans-Golgi network membrane. The protein resides in the golgi apparatus membrane. It is found in the cell projection. The protein localises to the axon. It localises to the cytoplasm. Its subcellular location is the cytoskeleton. In terms of biological role, cortical cytoskeleton protein found in a complex involved in maintaining cell polarity and epithelial integrity. Involved in the regulation of mitotic spindle orientation, proliferation, differentiation and tissue organization of neuroepithelial cells. Involved in axonogenesis through RAB10 activation thereby regulating vesicular membrane trafficking toward the axonal plasma membrane. The protein is Lethal(2) giant larvae protein homolog 1 (LLGL1) of Homo sapiens (Human).